The sequence spans 1377 residues: Endoribonuclease Dicer homolog 2b (1377 aa).

Positions 1–15 (MGGPLTAAGGRGDGG) are enriched in gly residues. The segment at 1–30 (MGGPLTAAGGRGDGGAKAVEPLRPPPPPDP) is disordered. A Helicase ATP-binding domain is found at 41-222 (ALERAVRGNT…HNYSKQISEI (182 aa)). 54-61 (LETGSGKT) serves as a coordination point for ATP. The DECH box signature appears at 163-166 (DECH). The Helicase C-terminal domain maps to 388–561 (TLLQYRHMQD…DTYYRVESTP (174 aa)). The 93-residue stretch at 534-626 (SLRLGSISCQ…LPELDVPCDE (93 aa)) folds into the Dicer dsRNA-binding fold domain. In terms of domain architecture, PAZ spans 798-913 (RDIDLLQTKD…LPPELCRIIM (116 aa)). RNase III domains lie at 940-1095 (SVKL…STAG) and 1132-1276 (VRSL…LDSK). Mg(2+)-binding residues include glutamate 1171, aspartate 1262, and glutamate 1265. Residues 1302–1367 (DPVKGLQEFC…SKAVLKDLIA (66 aa)) enclose the DRBM domain.

This sequence belongs to the helicase family. Dicer subfamily. May interact with ARGONAUTE1 or PINHEAD through their common PAZ domains. Requires Mg(2+) as cofactor. Mn(2+) is required as a cofactor.

Its subcellular location is the nucleus. In terms of biological role, probably involved in the RNA silencing pathway. May cleave double-stranded RNA to produce short 21-24 nucleotides (nt) RNAs which target the selective destruction of complementary RNAs. The protein is Endoribonuclease Dicer homolog 2b (DCL2B) of Oryza sativa subsp. japonica (Rice).